A 227-amino-acid polypeptide reads, in one-letter code: Ribosomal RNA large subunit methyltransferase E (227 aa).

5 residues coordinate S-adenosyl-L-methionine: G78, W80, D103, D119, and D143. Residue K183 is the Proton acceptor of the active site.

This sequence belongs to the class I-like SAM-binding methyltransferase superfamily. RNA methyltransferase RlmE family.

It localises to the cytoplasm. It carries out the reaction uridine(2552) in 23S rRNA + S-adenosyl-L-methionine = 2'-O-methyluridine(2552) in 23S rRNA + S-adenosyl-L-homocysteine + H(+). Specifically methylates the uridine in position 2552 of 23S rRNA at the 2'-O position of the ribose in the fully assembled 50S ribosomal subunit. The chain is Ribosomal RNA large subunit methyltransferase E from Rickettsia peacockii (strain Rustic).